Here is a 2939-residue protein sequence, read N- to C-terminus: MAPATETVDFKKLIVTLNGKTITGRTSALKSLISYFKGDETGSQAESHSQKLFDDKTYHYVYEALFTCALTEKADYFSCLKSSKSDSVRNSCVKRLEGCAEALRLAVQHGAYKIKRKTATAIADHITQTLLDSDDNFFEPLLKGYVKVLSAFLNIQVNVENLAAFGGEKWESSIDLCLNAISRFLEAAEHDSGTSVRASPAPGTPATSRAGSVGPLSASVQVNGQLAIEFLACVKALTSASNAPVLRRAKRISQLVLRLLTLRHIKLGELQRDSFSILNNILVRVQTESIALTNTITTALVPVLSHCWQPRSLSRDAMSTSLKDEMLKTLYGIHLYLESLLREATDDKLLQDTEDLLDSLWSEYSRRDDKTRLQLGDVTFSAMQLHPDHPLTMVFGLRPYHLAGEQNWALLENIALLEIVYAKNSQRDRQHLEDEPDKPRKRRRVIGSSNRIHQKLMSQDPAVQLTALQLIPFLSALKHPSLEEVKGALVDLSQFISAKQGLVASWAMIACSSLAAHKTSRDPSLSAMWKQAWHIGIRSLSLPSTSRSACVLLNWILKAKLLSDHEIAGDVNQIITTADISGPAMLVDSAPVLMLTLLRIRNAIFPNASQSTSSHVIRWVFLKWNPCESAYASVHGVHAAPVDLINLLRACYEMPPLRMNTSLTVFDGPVAQFRAVQKQRHAMLRYLLLLEDEAPPEDSHKATSTDQPKREEIRAADSSSSHSAKRLILELLFPKLDELLQMVELWHKRGESDSAAPVSTDRLVSVASTCIVGAFIMPELVGLNSSMSRDLEKTVFGIVEGMIKAIAESPQSEDFFNLVLEVSAPYIPTLGEAELTHFKREEPYALRLFATVSNSLLEKTRRESPTDSDPASMDLDDEFDSQETRKSTTAGKRFLSRRDITLKHTPEAFYLDTSLRLHLLRIIRADDGELGRVPDPIVDHLLELSDEDLLSCRLFMQELFASDVVTPVDLAIRMIERIAATISNNQYTCCEAAMCTVMDIMEGFITMWTDEELEISNLVGDIYDHLIKRALPNNSLSSTAQIWFSRLLFRLLEVNPMFASQVLKLPSTRSTLLTILRDAPMDVKFFIGINLPRIFGMHVLQTHDDIIVEILEVLPGEGMEGIAFRLFVLAELACKWPTLLRRCAYHIFETPGKNQTSASHATSCLKRVSRCLNLSSPQELFTIFAPQILYTWLAIDSIDEIPYSIFGFSNLAELLSKSQSEAVGIMIMRGHETDARELAKTLKLSIQELVTQNFSKIVAYSIAQDSSLPNEVTGESRVRRIIGAEPYSSNIILNFADILAIFFEICDQEYPIEDSFRKDAANFAYAADIMDKIKAFGHLDTMLPPNQQPSYKAKFLKRQILHLVKRTNYELHDIWTPALVVFVARKLLNTIHPALGPLHACSVLRKIRVLICLAGDTALYGYPLEMLLHSLRAFVVDPECADDALGITQYLITEGSDHLIRFPSFLAGYALSCLADLRVFLESSQSSTTQESQFKATKSKAQLFHAWFSKYLANYTTNAWKDKTQKEAFEAITQSAANIRVMGNAEKGTHESKLLLEILKDWGRQHQLLNGPARSVALSILCGSFNVPPPSRLDVIQSDEEALAHGAAVWMSCGSKKLSSEYLAWAGRVIGRSYAASGDVPPELLRESRLQEYRKKSPVNFDFMESEEALLSLIEALTASSDGFRAGLAEAALRVAVSDALHENDRPLITACQKSLSESLLVASEWGELRIPRSDRFSVEHPNETEIFSAEFLESPEWAQQLTTLLAQSVPGSVALRVLPPILTKVKGFAEQAFPFIVHNVLEYELDQTQGMKQKLSEALKEWLTSTSPAARDNQKLLINTILYLRTQANPNETSIADRLHWLEVNFSIAAAAATRCGMYKVALLFAELASTEITRQSRRSSAIQGLGDTSEILLDIFENIDDPDAYYGLTQDASLSTVLARLEYENDGTKSLAFRGAQYDSHLRRRDVASQQDGQALIKALSSLGLAGLSNSLLQTQQSLDGSSTSLDSTFITARRLEIWNLPAPAATENWAVTVYKAYQSMHQASDINMVRSAVHDGLTKTLKHLTGKSLNTLTLRHQLGALATLAELDDVLNTGDLSELNGIIEDFQARSKWMMSGQYDDVSRILSCRETTLSLWSQRHNLRPARLTPANARLAQIRGMLVSSDIYRFHRATQETLNLSTTLTDLIRPSEQMGLAVDAAIRMETANSLWDQGEMISSIRMLQNIDKESPLEKQTVPVSRSDLLSKIGYQVSVARLESPDTIQKNYLEPALKELKGKSEGKEAGRVYHQFAMFCDEQLQNPDGLEDLARLQNLERGKNDEVTQLKALIASTRDSQLKNKYSSHLSKAKQWLDLDQQELRRVEQTRSEFVRLSLQNYLLSLAASDEYNNDALRFTALWLECSEDDMVNEVVKRYLSKVPTRKFAPLINQLSSRLQHQEGLFQITLIGLVYSICLDHPYHGMYQIWSGVKARSIKNDEVALSRQKATDKIARAIKKSGASAAKIYLAINATSKVYHNLAMDRDAKKYKAGHKMNIKDSKAGLEFLAAFAEFPIPPPTMQMPLLASCDYSQVPMIVKFEPQMSIASGVSAPKIITAIGSDGRQYKQLVKGGNDDLRQDAIMEQVFAAVSELLKHHRATRQRNLGIRTYKVLPLTETTGVIEFVSNTIPLHEYLMPAHEIYYPKDLKGSHCRKEIMNAQSKSVDTRVAVYRKVTERFHPVMRYFFMEWFPDPDEWFARRTAYTRTTAAISMLGHVLGLGDRHGHNILLDTKTGEVVHIDLGVAFELGRILPVPELVPFRLTRDIVDGMGITKTEGVFRRCCEFTLDALREETYSIMTILDVLRYDPLYSWSMSPLRMARLQNVRVGAGEDDVVEAEDERRAGDKKSTKNLNEPSEADRALEVVRKKLSKTLSVMATVNDLINQATDERNLAVLFCGWAAYA.

3 disordered regions span residues 193 to 212 (GTSV…RAGS), 695 to 718 (PPED…AADS), and 859 to 886 (KTRR…ETRK). A compositionally biased stretch (basic and acidic residues) spans 697-715 (EDSHKATSTDQPKREEIRA). The region spanning 1869–2471 (IAAAAATRCG…MYQIWSGVKA (603 aa)) is the FAT domain. In terms of domain architecture, PI3K/PI4K catalytic spans 2577–2890 (FEPQMSIASG…DKKSTKNLNE (314 aa)). The interval 2583–2589 (IASGVSA) is G-loop. The catalytic loop stretch occupies residues 2755–2763 (GLGDRHGHN). Positions 2775–2799 (HIDLGVAFELGRILPVPELVPFRLT) are activation loop. The interval 2869-2894 (DVVEAEDERRAGDKKSTKNLNEPSEA) is disordered. Residues 2875-2884 (DERRAGDKKS) show a composition bias toward basic and acidic residues. The 33-residue stretch at 2907-2939 (KTLSVMATVNDLINQATDERNLAVLFCGWAAYA) folds into the FATC domain.

This sequence belongs to the PI3/PI4-kinase family. ATM subfamily. In terms of assembly, associates with DNA double-strand breaks.

It localises to the nucleus. The protein resides in the chromosome. The protein localises to the telomere. The enzyme catalyses L-seryl-[protein] + ATP = O-phospho-L-seryl-[protein] + ADP + H(+). The catalysed reaction is L-threonyl-[protein] + ATP = O-phospho-L-threonyl-[protein] + ADP + H(+). In terms of biological role, serine/threonine protein kinase which activates checkpoint signaling upon genotoxic stresses such as ionizing radiation (IR), ultraviolet light (UV), or DNA replication stalling, thereby acting as a DNA damage sensor. Recognizes the substrate consensus sequence [ST]-Q. Phosphorylates histone H2A to form H2AS128ph (gamma-H2A) at sites of DNA damage, involved in the regulation of DNA damage response mechanism. Required for the control of telomere length and genome stability. The protein is Serine/threonine-protein kinase tel1 (mus-21) of Neurospora crassa (strain ATCC 24698 / 74-OR23-1A / CBS 708.71 / DSM 1257 / FGSC 987).